Here is a 1633-residue protein sequence, read N- to C-terminus: D-lysergyl-peptide-synthetase subunit 3 (1633 aa).

The adenylation (A) domain stretch occupies residues Phe-80 to Arg-483. The 70-residue stretch at Glu-622 to Ser-691 folds into the Carrier domain. Residue Ser-654 is modified to O-(pantetheine 4'-phosphoryl)serine. The interval Pro-836–Ala-1127 is condensation (C) domain. The reductase (R) domain stretch occupies residues Val-1256 to Trp-1483.

Belongs to the NRP synthetase family.

It functions in the pathway alkaloid biosynthesis; ergot alkaloid biosynthesis. In terms of biological role, D-lysergyl-peptide-synthetase subunit 3; part of the gene cluster that mediates the biosynthesis of fungal ergot alkaloid. DmaW catalyzes the first step of ergot alkaloid biosynthesis by condensing dimethylallyl diphosphate (DMAP) and tryptophan to form 4-dimethylallyl-L-tryptophan. The second step is catalyzed by the methyltransferase easF that methylates 4-dimethylallyl-L-tryptophan in the presence of S-adenosyl-L-methionine, resulting in the formation of 4-dimethylallyl-L-abrine. The catalase easC and the FAD-dependent oxidoreductase easE then transform 4-dimethylallyl-L-abrine to chanoclavine-I which is further oxidized by easD in the presence of NAD(+), resulting in the formation of chanoclavine-I aldehyde. Agroclavine dehydrogenase easG then mediates the conversion of chanoclavine-I aldehyde to agroclavine via a non-enzymatic adduct reaction: the substrate is an iminium intermediate that is formed spontaneously from chanoclavine-I aldehyde in the presence of glutathione. The presence of easA is not required to complete this reaction. Further conversion of agroclavine to paspalic acid is a two-step process involving oxidation of agroclavine to elymoclavine and of elymoclavine to paspalic acid, the second step being performed by the elymoclavine oxidase cloA. Paspalic acid is then further converted to D-lysergic acid. Ergopeptines are assembled from D-lysergic acid and three different amino acids by the D-lysergyl-peptide-synthetases composed each of a monomudular and a trimodular nonribosomal peptide synthetase subunit. LpsB and lpsC encode the monomodular subunits responsible for D-lysergic acid activation and incorporation into the ergopeptine backbone. LpsA1 and A2 subunits encode the trimodular nonribosomal peptide synthetase assembling the tripeptide portion of ergopeptines. LpsA1 is responsible for formation of the major ergopeptine, ergotamine, and lpsA2 for alpha-ergocryptine, the minor ergopeptine of the total alkaloid mixture elaborated by C.purpurea. D-lysergyl-tripeptides are assembled by the nonribosomal peptide synthetases and released as N-(D-lysergyl-aminoacyl)-lactams. Cyclolization of the D-lysergyl-tripeptides is performed by the Fe(2+)/2-ketoglutarate-dependent dioxygenase easH which introduces a hydroxyl group into N-(D-lysergyl-aminoacyl)-lactam at alpha-C of the aminoacyl residue followed by spontaneous condensation with the terminal lactam carbonyl group. The sequence is that of D-lysergyl-peptide-synthetase subunit 3 from Claviceps purpurea (Ergot fungus).